The sequence spans 1288 residues: Contactin-associated protein-like 3 (1288 aa).

The signal sequence occupies residues 1-25; it reads MASVAWAVLKVLLLLPTQTWSPVGA. The Extracellular portion of the chain corresponds to 26–1245; sequence GNPPDCDAPL…LVNADRRDSA (1220 aa). One can recognise an F5/8 type C domain in the interval 31–177; that stretch reads CDAPLASALP…IGMRIEVYGC (147 aa). Cysteine 31 and cysteine 177 are joined by a disulfide. 2 consecutive Laminin G-like domains span residues 183–364 and 370–545; these read VVYF…SFSC and VPVT…IDSC. N-linked (GlcNAc...) asparagine glycans are attached at residues asparagine 285, asparagine 359, asparagine 441, and asparagine 497. Cysteine 332 and cysteine 364 are joined by a disulfide. Disulfide bonds link cysteine 513–cysteine 545, cysteine 551–cysteine 562, cysteine 556–cysteine 571, and cysteine 573–cysteine 583. The EGF-like 1 domain maps to 551-583; that stretch reads CLPSYCEHGGECSQSWDTFSCDCLGTGYTGETC. The 209-residue stretch at 584–792 folds into the Fibrinogen C-terminal domain; that stretch reads HSSLYEQSCE…LLCRGDQSFW (209 aa). N-linked (GlcNAc...) asparagine glycans are attached at residues asparagine 623 and asparagine 706. The Laminin G-like 3 domain maps to 793 to 958; it reads NSASFNTETS…TVTPGVEPGC (166 aa). Disulfide bonds link cysteine 931/cysteine 958, cysteine 962/cysteine 975, cysteine 969/cysteine 984, and cysteine 986/cysteine 996. Residues 962 to 996 form the EGF-like 2 domain; that stretch reads CSTYGHLCRNGGRCREKRRGVTCDCAFSAYDGPFC. One can recognise a Laminin G-like 4 domain in the interval 1015–1203; that stretch reads QEHYTLSENS…RGHVAPMARC (189 aa). 3 N-linked (GlcNAc...) asparagine glycosylation sites follow: asparagine 1023, asparagine 1073, and asparagine 1120. A disulfide bridge connects residues cysteine 1167 and cysteine 1203. The segment at 1215–1236 is disordered; the sequence is ELAPRLAGGAGRSGPADEGEPL. A helical transmembrane segment spans residues 1246–1266; it reads VIGGVIAVVIFILLCITAIAI. Residues 1267–1288 are Cytoplasmic-facing; sequence RIYQQRKLRKENESKVSKKEEC.

It belongs to the neurexin family.

It is found in the cell membrane. It localises to the secreted. This is Contactin-associated protein-like 3 (CNTNAP3) from Homo sapiens (Human).